The following is a 150-amino-acid chain: Large ribosomal subunit protein bL9 (150 aa).

It belongs to the bacterial ribosomal protein bL9 family.

Binds to the 23S rRNA. This Thioalkalivibrio sulfidiphilus (strain HL-EbGR7) protein is Large ribosomal subunit protein bL9.